Consider the following 243-residue polypeptide: Transmembrane protein 174 (243 aa).

Transmembrane regions (helical) follow at residues 40–60 (LLFS…MGWI) and 73–93 (LLGP…VCKF).

As to quaternary structure, interacts with SLC34A1; regulates SLC34A1 internalization by PTH and FGF23. In terms of tissue distribution, predominantly expressed in kidney. Selectively localized in the apical membrane of renal proximal tubule epithelial cells.

The protein resides in the endoplasmic reticulum membrane. It localises to the apical cell membrane. Its function is as follows. Regulator of plasma phosphate homeostasis. Decreases serum inorganic phosphate (Pi) uptake by regulating the sodium-phosphate cotransporter SLC34A1 trafficking by PTH and FGF23 in the kidney. The chain is Transmembrane protein 174 (TMEM174) from Homo sapiens (Human).